The sequence spans 283 residues: 2-dehydro-3-deoxyphosphooctonate aldolase (283 aa).

It belongs to the KdsA family.

The protein resides in the cytoplasm. The catalysed reaction is D-arabinose 5-phosphate + phosphoenolpyruvate + H2O = 3-deoxy-alpha-D-manno-2-octulosonate-8-phosphate + phosphate. It functions in the pathway carbohydrate biosynthesis; 3-deoxy-D-manno-octulosonate biosynthesis; 3-deoxy-D-manno-octulosonate from D-ribulose 5-phosphate: step 2/3. Its pathway is bacterial outer membrane biogenesis; lipopolysaccharide biosynthesis. This Vibrio parahaemolyticus serotype O3:K6 (strain RIMD 2210633) protein is 2-dehydro-3-deoxyphosphooctonate aldolase.